The sequence spans 407 residues: Imidazolonepropionase (407 aa).

Fe(3+)-binding residues include H68 and H70. Zn(2+) contacts are provided by H68 and H70. Positions 77, 140, and 173 each coordinate 4-imidazolone-5-propanoate. Residue Y140 coordinates N-formimidoyl-L-glutamate. H238 lines the Fe(3+) pocket. Zn(2+) is bound at residue H238. Q241 serves as a coordination point for 4-imidazolone-5-propanoate. D313 serves as a coordination point for Fe(3+). D313 lines the Zn(2+) pocket. The N-formimidoyl-L-glutamate site is built by N315 and G317. T318 contacts 4-imidazolone-5-propanoate.

This sequence belongs to the metallo-dependent hydrolases superfamily. HutI family. It depends on Zn(2+) as a cofactor. The cofactor is Fe(3+).

It is found in the cytoplasm. It carries out the reaction 4-imidazolone-5-propanoate + H2O = N-formimidoyl-L-glutamate. It functions in the pathway amino-acid degradation; L-histidine degradation into L-glutamate; N-formimidoyl-L-glutamate from L-histidine: step 3/3. Its function is as follows. Catalyzes the hydrolytic cleavage of the carbon-nitrogen bond in imidazolone-5-propanoate to yield N-formimidoyl-L-glutamate. It is the third step in the universal histidine degradation pathway. This Burkholderia cenocepacia (strain ATCC BAA-245 / DSM 16553 / LMG 16656 / NCTC 13227 / J2315 / CF5610) (Burkholderia cepacia (strain J2315)) protein is Imidazolonepropionase.